The following is a 124-amino-acid chain: MALNKEDILTWLEGAKTMEVVELVTAIEEKFGVTAAVATSVGGAASTGSTDSEEQTEFDVILMSFGDSKINVIKEVRSITGLGLGEAKALVESAPKAIKEGLSKSDAEELKKKLEAVGAKVEVK.

The protein belongs to the bacterial ribosomal protein bL12 family. Homodimer. Part of the ribosomal stalk of the 50S ribosomal subunit. Forms a multimeric L10(L12)X complex, where L10 forms an elongated spine to which 2 to 4 L12 dimers bind in a sequential fashion. Binds GTP-bound translation factors.

Functionally, forms part of the ribosomal stalk which helps the ribosome interact with GTP-bound translation factors. Is thus essential for accurate translation. The protein is Large ribosomal subunit protein bL12 of Borreliella afzelii (strain PKo) (Borrelia afzelii).